The primary structure comprises 335 residues: Tryptophan--tRNA ligase (335 aa).

Residues 9 to 11 (QST) and 17 to 18 (GN) each bind ATP. The 'HIGH' region motif lies at 10–18 (STNSLTLGN). D137 serves as a coordination point for L-tryptophan. ATP is bound by residues 149–151 (GKD), I189, and 198–202 (KMSKS). A 'KMSKS' region motif is present at residues 198–202 (KMSKS).

Belongs to the class-I aminoacyl-tRNA synthetase family. Homodimer.

The protein resides in the cytoplasm. It catalyses the reaction tRNA(Trp) + L-tryptophan + ATP = L-tryptophyl-tRNA(Trp) + AMP + diphosphate + H(+). In terms of biological role, catalyzes the attachment of tryptophan to tRNA(Trp). The chain is Tryptophan--tRNA ligase from Malacoplasma penetrans (strain HF-2) (Mycoplasma penetrans).